The following is a 368-amino-acid chain: Phosphoserine aminotransferase (368 aa).

Arg42 lines the L-glutamate pocket. Pyridoxal 5'-phosphate is bound by residues 76-77 (AS), Trp102, Thr152, Asp179, and Gln202. Residue Lys203 is modified to N6-(pyridoxal phosphate)lysine. 245–246 (NT) lines the pyridoxal 5'-phosphate pocket.

The protein belongs to the class-V pyridoxal-phosphate-dependent aminotransferase family. SerC subfamily. In terms of assembly, homodimer. Pyridoxal 5'-phosphate serves as cofactor.

It is found in the cytoplasm. It carries out the reaction O-phospho-L-serine + 2-oxoglutarate = 3-phosphooxypyruvate + L-glutamate. The enzyme catalyses 4-(phosphooxy)-L-threonine + 2-oxoglutarate = (R)-3-hydroxy-2-oxo-4-phosphooxybutanoate + L-glutamate. It participates in amino-acid biosynthesis; L-serine biosynthesis; L-serine from 3-phospho-D-glycerate: step 2/3. It functions in the pathway cofactor biosynthesis; pyridoxine 5'-phosphate biosynthesis; pyridoxine 5'-phosphate from D-erythrose 4-phosphate: step 3/5. In terms of biological role, catalyzes the reversible conversion of 3-phosphohydroxypyruvate to phosphoserine and of 3-hydroxy-2-oxo-4-phosphonooxybutanoate to phosphohydroxythreonine. This is Phosphoserine aminotransferase from Nitrosomonas europaea (strain ATCC 19718 / CIP 103999 / KCTC 2705 / NBRC 14298).